The sequence spans 308 residues: tRNA dimethylallyltransferase (308 aa).

11-18 (GSTATGKS) lines the ATP pocket. 13 to 18 (TATGKS) is a binding site for substrate. The segment at 36–39 (DSVQ) is interaction with substrate tRNA.

It belongs to the IPP transferase family. As to quaternary structure, monomer. Mg(2+) serves as cofactor.

The enzyme catalyses adenosine(37) in tRNA + dimethylallyl diphosphate = N(6)-dimethylallyladenosine(37) in tRNA + diphosphate. Functionally, catalyzes the transfer of a dimethylallyl group onto the adenine at position 37 in tRNAs that read codons beginning with uridine, leading to the formation of N6-(dimethylallyl)adenosine (i(6)A). The sequence is that of tRNA dimethylallyltransferase from Bdellovibrio bacteriovorus (strain ATCC 15356 / DSM 50701 / NCIMB 9529 / HD100).